The primary structure comprises 344 residues: GDSL esterase/lipase At1g73610 (344 aa).

The signal sequence occupies residues M1–A24. N30 carries N-linked (GlcNAc...) asparagine glycosylation. S42 (nucleophile) is an active-site residue. Catalysis depends on residues D319 and H322.

Belongs to the 'GDSL' lipolytic enzyme family.

It localises to the secreted. This is GDSL esterase/lipase At1g73610 from Arabidopsis thaliana (Mouse-ear cress).